A 106-amino-acid polypeptide reads, in one-letter code: DNA-directed RNA polymerase subunit Rpo6 (106 aa).

Belongs to the archaeal Rpo6/eukaryotic RPB6 RNA polymerase subunit family. As to quaternary structure, part of the RNA polymerase complex.

The protein localises to the cytoplasm. The catalysed reaction is RNA(n) + a ribonucleoside 5'-triphosphate = RNA(n+1) + diphosphate. In terms of biological role, DNA-dependent RNA polymerase (RNAP) catalyzes the transcription of DNA into RNA using the four ribonucleoside triphosphates as substrates. The protein is DNA-directed RNA polymerase subunit Rpo6 of Pyrobaculum aerophilum (strain ATCC 51768 / DSM 7523 / JCM 9630 / CIP 104966 / NBRC 100827 / IM2).